The primary structure comprises 616 residues: Fatty acyl-CoA reductase 2, chloroplastic (616 aa).

The transit peptide at 1-14 (MEALFLSSSSSSIV) directs the protein to the chloroplast. Residues 133 to 143 (FLITGSTGFLA) carry the NAD(P)H-binding motif. Catalysis depends on residues tyrosine 357 and lysine 361.

Belongs to the fatty acyl-CoA reductase family. As to expression, expressed in the tapetum of anthers.

Its subcellular location is the plastid. The protein localises to the chloroplast. The enzyme catalyses a long-chain fatty acyl-CoA + 2 NADPH + 2 H(+) = a long-chain primary fatty alcohol + 2 NADP(+) + CoA. It catalyses the reaction hexadecanoyl-CoA + 2 NADPH + 2 H(+) = hexadecan-1-ol + 2 NADP(+) + CoA. It carries out the reaction hexadecanoyl-[ACP] + 2 NADPH + 2 H(+) = hexadecan-1-ol + holo-[ACP] + 2 NADP(+). In terms of biological role, catalyzes the reduction of fatty acyl-CoA and -ACP (acyl carrier protein) substrates to fatty alcohols. Triggers the accumulation of C16 and C18 fatty alcohols; converts palmitoyl-acyl carrier protein to the corresponding C16:0 alcohol with NAD(P)H as electron donor, but seems inactive toward palmitoyl- or other acyl-coenzyme A. Also triggers the formation of some C16:0 aldehydes. Involved in the synthesis of the lipid component in sporopollenin. Required for exine patterning of pollen grain by mediating the formation of pollen wall substances. This is Fatty acyl-CoA reductase 2, chloroplastic from Arabidopsis thaliana (Mouse-ear cress).